Here is a 485-residue protein sequence, read N- to C-terminus: Putative ATP-dependent RNA helicase ste13 (485 aa).

Residues 16–38 form a disordered region; that stretch reads DRESFKGQMKAQPVDMRPKTEDV. The Q motif motif lies at 44-72; sequence TEFEDYYLKRELLMGIFEAGFERPSPIQE. One can recognise a Helicase ATP-binding domain in the interval 75–245; it reads IPIALSGRDI…DKHLNKPYEI (171 aa). 88–95 contacts ATP; sequence AKNGTGKT. Positions 193–196 match the DEAD box motif; that stretch reads DEAD. The Helicase C-terminal domain maps to 255 to 415; the sequence is GVTQYYAFVD…PIPPSIDPSL (161 aa). A disordered region spans residues 437–485; that stretch reads LAAQQAKGQEGYHNRPNNNRGGHPRGGGNRGGYRQSNRQPRYRGQQKAD.

The protein belongs to the DEAD box helicase family. DDX6/DHH1 subfamily.

Its subcellular location is the cytoplasm. The protein resides in the P-body. The enzyme catalyses ATP + H2O = ADP + phosphate + H(+). In terms of biological role, ATP-dependent RNA helicase involved in mRNA turnover, and more specifically in mRNA decapping. Is involved in G1/S DNA-damage checkpoint recovery, probably through the regulation of the translational status of a subset of mRNAs. May also have a role in translation and mRNA nuclear export. The polypeptide is Putative ATP-dependent RNA helicase ste13 (ste13) (Schizosaccharomyces pombe (strain 972 / ATCC 24843) (Fission yeast)).